The chain runs to 271 residues: HTH-type transcriptional repressor AllR (271 aa).

One can recognise an HTH iclR-type domain in the interval A21–L83. Residues V43–K62 constitute a DNA-binding region (H-T-H motif). An IclR-ED domain is found at V98–L267. Glyoxylate contacts are provided by residues S154–A156, D207, C217, and S234–S236.

Functionally, negative regulator of allantoin and glyoxylate utilization operons. Binds to the gcl promoter and to the allS-allA intergenic region. In Escherichia coli O6:H1 (strain CFT073 / ATCC 700928 / UPEC), this protein is HTH-type transcriptional repressor AllR (allR).